A 419-amino-acid chain; its full sequence is MNKHQKPVLTGQRFKTRKRDEKEKFEPTVFRDTLVQGLNEAGDDLEAVAKFLDSTGSRLDYRRYADTLFDILVAGSMLAPGGTRIDDGDKTKMTNHCVFSANEDHETIRNYAQVFNKLIRRYKYLEKAFEDEMKKLLLFLKAFSETEQTKLAMLSGILLGNGTLPATILTSLFTDSLVKEGIAASFAVKLFKAWMAEKDANSVTSSLRKANLDKRLLELFPVNRQSVDHFAKYFTDAGLKELSDFLRVQQSLGTRKELQKELQERLSQECPIKEVVLYVKEEMKRNDLPETAVIGLLWTCIMNAVEWNKKEELVAEQALKHLKQYAPLLAVFSSQGQSELILLQKVQEYCYDNIHFMKAFQKIVVLFYKADVLSEEAILKWYKEAHVAKGKSVFLDQMKKFVEWLQNAEEESESEGEEN.

A disordered region spans residues 1–22 (MNKHQKPVLTGQRFKTRKRDEK). Position 117 is an N6-acetyllysine (lysine 117). A W2 domain is found at 248 to 415 (VQQSLGTRKE…QNAEEESESE (168 aa)). 2 positions are modified to phosphoserine: serine 412 and serine 414.

It belongs to the BZW family. In terms of assembly, interacts with EIF3E. Interacts with EIF2S2. Interacts with EIF3C.

It localises to the cytoplasm. Translation initiation regulator which represses non-AUG initiated translation and repeat-associated non-AUG (RAN) initiated translation by acting as a competitive inhibitor of eukaryotic translation initiation factor 5 (EIF5) function. Increases the accuracy of translation initiation by impeding EIF5-dependent translation from non-AUG codons by competing with it for interaction with EIF2S2 within the 43S pre-initiation complex (PIC) in an EIF3C-binding dependent manner. This Homo sapiens (Human) protein is eIF5-mimic protein 1 (BZW2).